We begin with the raw amino-acid sequence, 1014 residues long: Probable LRR receptor-like serine/threonine-protein kinase At1g07650 (1014 aa).

An N-terminal signal peptide occupies residues 1–23 (MIYLHRIYFIIVLFTLIFHGRLG). The Extracellular portion of the chain corresponds to 24-619 (FSDNNKLHEA…KPPVYYDTKD (596 aa)). 3 N-linked (GlcNAc...) asparagine glycosylation sites follow: asparagine 76, asparagine 87, and asparagine 101. 11 LRR repeats span residues 89-112 (SCHV…EFSK), 113-137 (LRHL…WASM), 139-160 (LEDL…LTRL), 161-184 (TMLR…IGQL), 186-207 (HLEK…KLGL), 208-234 (LKNL…NWTR), 256-279 (LTSL…PLKN), 280-304 (LESI…IGDL), 305-327 (KKLK…SFEN), 329-352 (KKAD…FVER), and 354-376 (KNVD…DCNR). Asparagine 165 carries N-linked (GlcNAc...) asparagine glycosylation. Residues asparagine 210, asparagine 220, and asparagine 231 are each glycosylated (N-linked (GlcNAc...) asparagine). N-linked (GlcNAc...) asparagine glycans are attached at residues asparagine 362, asparagine 389, asparagine 474, asparagine 481, and asparagine 511. The LRR 12 repeat unit spans residues 516-539 (LHFAEIIFTDDNTLYSLGKRLFDI). N-linked (GlcNAc...) asparagine glycosylation is present at asparagine 570. Residues 620-640 (IILKVGVPVAAATLLLFIIVG) form a helical membrane-spanning segment. The Cytoplasmic segment spans residues 641 to 1014 (VFWKKRRDKN…DAEEKTGLLD (374 aa)). Threonine 667 is modified (phosphothreonine). The Protein kinase domain occupies 678–960 (FDVTRKIGEG…EGKTAMQELL (283 aa)). ATP-binding positions include 684–692 (IGEGGFGSV) and lysine 706. The residue at position 751 (tyrosine 751) is a Phosphotyrosine. Aspartate 805 functions as the Proton acceptor in the catalytic mechanism. Phosphoserine is present on residues serine 809 and serine 838. A phosphothreonine mark is found at threonine 839 and threonine 844. Tyrosine 852 bears the Phosphotyrosine mark. Phosphoserine is present on serine 989. The span at 989 to 1002 (SFSTSGPRTASANS) shows a compositional bias: polar residues. The disordered stretch occupies residues 989–1014 (SFSTSGPRTASANSLVDAEEKTGLLD).

It belongs to the protein kinase superfamily. Ser/Thr protein kinase family.

Its subcellular location is the membrane. It carries out the reaction L-seryl-[protein] + ATP = O-phospho-L-seryl-[protein] + ADP + H(+). The catalysed reaction is L-threonyl-[protein] + ATP = O-phospho-L-threonyl-[protein] + ADP + H(+). This Arabidopsis thaliana (Mouse-ear cress) protein is Probable LRR receptor-like serine/threonine-protein kinase At1g07650.